Consider the following 125-residue polypeptide: uncharacterized protein (125 aa).

The protein belongs to the asfivirus B125R family.

This is an uncharacterized protein from African swine fever virus (isolate Tick/Malawi/Lil 20-1/1983) (ASFV).